The primary structure comprises 430 residues: Microtubule-associated protein tau (430 aa).

Positions 1 to 16 (MAEPRQEFDTAEDHAE) are enriched in basic and acidic residues. A disordered region spans residues 1 to 245 (MAEPRQEFDT…PVPMPDLKNV (245 aa)). At A2 the chain carries N-acetylalanine. Phosphotyrosine is present on Y18. Residue K31 forms a Glycyl lysine isopeptide (Lys-Gly) (interchain with G-Cter in ubiquitin) linkage. 2 positions are modified to phosphoserine: S33 and S48. The segment covering 48–58 (SETSDAKSTPT) has biased composition (polar residues). T56, T58, and T98 each carry phosphothreonine. Basic and acidic residues predominate over residues 117 to 133 (KGKEGTGSEDRKAKGAD). Residue T142 is modified to Phosphothreonine. At R144 the chain carries Omega-N-methylarginine. An N6,N6-dimethyllysine; alternate modification is found at K152. N6-acetyllysine; alternate is present on K152. T158, T164, T165, and T170 each carry phosphothreonine. The span at 161-203 (PAKTTPSPKTPPGTGEPAKSGDRSGYSSPGSPGTPGSRSRTPS) shows a compositional bias: low complexity. S180 and S184 each carry phosphoserine. The residue at position 186 (Y186) is a Phosphotyrosine. Residues S187, S188, and S191 each carry the phosphoserine modification. 2 positions are modified to phosphothreonine: T194 and T201. S203 carries the phosphoserine modification. T206 bears the Phosphothreonine mark. K214 is modified (N6-acetyllysine). Phosphothreonine is present on T220. Phosphoserine occurs at positions 224 and 226. Tau/MAP repeat units lie at residues 233-263 (QTAP…GGGK), 264-294 (VQII…GGGS), 295-325 (VQIV…GGGQ), and 326-357 (VEVK…GGGN). K243 is covalently cross-linked (Glycyl lysine isopeptide (Lys-Gly) (interchain with G-Cter in ubiquitin)). K248 is subject to N6-acetyllysine; alternate. K248 carries the N6-methyllysine; alternate modification. A Glycyl lysine isopeptide (Lys-Gly) (interchain with G-Cter in ubiquitin); alternate cross-link involves residue K248. S251 is modified (phosphoserine). Residue K256 forms a Glycyl lysine isopeptide (Lys-Gly) (interchain with G-Cter in ubiquitin) linkage. Position 270 is an N6-acetyllysine; alternate (K270). A Glycyl lysine isopeptide (Lys-Gly) (interchain with G-Cter in ubiquitin); alternate cross-link involves residue K270. Phosphoserine occurs at positions 274 and 278. The residue at position 279 (K279) is an N6-acetyllysine. An intrachain disulfide couples C280 to C311. Position 282 is a phosphoserine (S282). K287 bears the N6-acetyllysine; alternate mark. A Glycyl lysine isopeptide (Lys-Gly) (interchain with G-Cter in ubiquitin); alternate cross-link involves residue K287. Phosphoserine is present on S294. The residue at position 300 (K300) is an N6,N6-dimethyllysine; alternate. An N6-acetyllysine; alternate mark is found at K300, K306, and K310. Glycyl lysine isopeptide (Lys-Gly) (interchain with G-Cter in ubiquitin); alternate cross-links involve residues K300, K306, and K310. A Phosphoserine modification is found at S313. Residues K320, K332, and K336 each carry the N6-acetyllysine; alternate modification. Residues K320, K332, and K336 each participate in a glycyl lysine isopeptide (Lys-Gly) (interchain with G-Cter in ubiquitin); alternate cross-link. R338 bears the Omega-N-methylarginine mark. The residue at position 341 (S341) is a Phosphoserine. K342 participates in a covalent cross-link: Glycyl lysine isopeptide (Lys-Gly) (interchain with G-Cter in ubiquitin). The residue at position 345 (S345) is a Phosphoserine. Position 358 is an N6-acetyllysine; alternate (K358). Residue K358 forms a Glycyl lysine isopeptide (Lys-Gly) (interchain with G-Cter in ubiquitin); alternate linkage. K364 participates in a covalent cross-link: Glycyl lysine isopeptide (Lys-Gly) (interchain with G-Cter in ubiquitin). At K374 the chain carries N6-acetyllysine; alternate. Residue K374 forms a Glycyl lysine isopeptide (Lys-Gly) (interchain with G-Cter in ubiquitin); alternate linkage. Y383 carries the phosphotyrosine modification. A phosphoserine mark is found at S385 and S389. The disordered stretch occupies residues 387-406 (VVSGDTSPRHLSNVSSTGSI). Over residues 390-406 (GDTSPRHLSNVSSTGSI) the composition is skewed to polar residues. At T392 the chain carries Phosphothreonine. A phosphoserine mark is found at S393, S398, S405, and S411. Phosphothreonine is present on T416.

As to quaternary structure, interacts with MARK1, MARK2, MARK3 and MARK4. Interacts with SQSTM1 when polyubiquitinated. Interacts with PSMC2 through SQSTM1. Interacts with FKBP4. Binds to CSNK1D. Interacts with SGK1. Interacts with PIN1. Interacts with LRRK2. Interacts with LRP1, leading to endocytosis; this interaction is reduced in the presence of LRPAP1/RAP. In terms of processing, polyubiquitinated. Requires functional TRAF6 and may provoke SQSTM1-dependent degradation by the proteasome. Phosphorylation at various serine and threonine residues in S-P or T-P motifs by proline-directed protein kinases (PDPK1, CDK1, CDK5, GSK3, MAPK) (a few sites per protein in interphase, more in mitosis), and at serine residues in K-X-G-S motifs by MAP/microtubule affinity-regulating kinase (MARK1, MARK2, MARK3 or MARK4), causing detachment from microtubules, and their disassembly. Phosphorylation at Ser-345 by BRSK1 and BRSK2 in neurons affects ability to bind microtubules and plays a role in neuron polarization. Phosphorylated by PHK. Dephosphorylation at several serine and threonine residues by the serine/threonine phosphatase PPP5C. Post-translationally, hyperphosphorylated (in particular at Thr-170, Ser-191, Thr-194, Ser-251, and Ser-345) during hibernation. Phosphorylation is fully reversible after arousal. Highly phosphorylated tau contains a number of paired helical filaments (PHFs)-like epitopes. PHF-like phosphorylation is not associated with fibril formation. Distribution of PHF-like tau is more intense in the entorhinal cortex, hippocampus and isocortical areas. PHF-like phosphorylation-dephosphorylation during hibernation cycle is synchronized with regression-re-establishment of afferentation. It may reflect a protective mechanism in an unfavorable environment.

The protein localises to the cytoplasm. Its subcellular location is the cytosol. The protein resides in the cell membrane. It is found in the cytoskeleton. It localises to the cell projection. The protein localises to the axon. Its subcellular location is the dendrite. In terms of biological role, promotes microtubule assembly and stability, and might be involved in the establishment and maintenance of neuronal polarity. The C-terminus binds axonal microtubules while the N-terminus binds neural plasma membrane components, suggesting that tau functions as a linker protein between both. Axonal polarity is predetermined by tau localization (in the neuronal cell) in the domain of the cell body defined by the centrosome. The short isoforms allow plasticity of the cytoskeleton whereas the longer isoforms may preferentially play a role in its stabilization. This is Microtubule-associated protein tau (MAPT) from Spermophilus citellus (European ground squirrel).